A 403-amino-acid chain; its full sequence is MEKMTTLKSSENKGILTSTPIRGAGDGMETEEPPKSVEVTHGVQPINQHVLPSPRKKVSSDSPGVLQLGKILNERTVEVEAVRIFVPKAAITHDIPTKNTKVKSLGHHREELHNQAEVVTDPRKELSEVKKVLEKLKNSERRLLQDKEGLSNQLRVQTEINRELKKLLVASVGDDPQYHFERLAREKNQLILENEALGRNTAQLSEQLERMSIQCDVWRSKFLASRVMADELTNFRVVLQRQNRDAQSAIQDLLSEREQFRQEMTSTQKFLEELLVSLQWGREQTYSPNTQPHSTADLALTNHGLAQAIHAHLLGNVGISHQKKIPTTVEFCSTPAEKMAEKVLRILDPVACTESSPDNQFAESSPTTLLTTKKNIGRFHPYTRYENITFNCCNHCQGELIAL.

Residues 1–63 (MEKMTTLKSS…PRKKVSSDSP (63 aa)) are disordered. The short motif at 22–26 (RGAGD) is the Tankyrase-binding motif element. Serine 53 bears the Phosphoserine mark. Positions 123–216 (RKELSEVKKV…QLERMSIQCD (94 aa)) form a coiled coil. A Phosphoserine modification is found at serine 356. The interval 397–403 (QGELIAL) is essential for interaction with GORASP2.

In terms of assembly, interacts with GORASP2. Interacts with the GTP-bound form of RAB2, but not with other Golgi Rab proteins. Identified in a complex with RAB2 and GORASP2. ADP-ribosylated by tankyrase TNKS and TNKS2. Poly-ADP-ribosylated protein is recognized by RNF146, followed by ubiquitination. In terms of processing, ubiquitinated by RNF146 when poly-ADP-ribosylated, leading to its degradation.

Its subcellular location is the golgi apparatus membrane. Functionally, required for normal Golgi structure and for protein transport from the endoplasmic reticulum (ER) through the Golgi apparatus to the cell surface. The sequence is that of Golgin-45 (Blzf1) from Mus musculus (Mouse).